The chain runs to 132 residues: Small ribosomal subunit protein uS8c (132 aa).

The protein belongs to the universal ribosomal protein uS8 family. As to quaternary structure, part of the 30S ribosomal subunit.

The protein localises to the plastid. It localises to the chloroplast. In terms of biological role, one of the primary rRNA binding proteins, it binds directly to 16S rRNA central domain where it helps coordinate assembly of the platform of the 30S subunit. In Buxus microphylla (Littleleaf boxwood), this protein is Small ribosomal subunit protein uS8c (rps8).